Reading from the N-terminus, the 560-residue chain is Exonuclease subunit 2 (560 aa).

Residue 36–43 (GRNGGGKS) participates in ATP binding.

It to phage T5 protein D13 and to yeast RAD52. As to quaternary structure, consists of two subunits: gp46 and gp47.

Functionally, exonuclease that plays a role in viral genome replication, DNA recombination, and host DNA degradation. The sequence is that of Exonuclease subunit 2 (46) from Enterobacteria phage T4 (Bacteriophage T4).